A 614-amino-acid chain; its full sequence is MGLHTLLLLLLLRISASAAASRPPLDTLGIPPQDEAYFRGGVIRCRDGSGRFARDKLNDDFCDCPDGTDEPGTSACPEGKFYCQNAGHSPITIFSSRVNDGICDCCDGSDEYDSNVTCKNTCWEAGKAARDKLKKKVATYKSGVVIRNQEIQKAKVAFAKDEAELAKLKGEEKILQGLVDKLTEQKKLIEKAEEEERLRKEKEEKRMKEEAEKQAADEKKASDASQEVDSQENHETVQEDESKVAEHHDGHATSHDNHTPESESSVEQHDPESQDDISIKAAPADESPPEETSAAPTKEQESTPADSEGLSREELGRLVASRWTGEKVDEVSKDDKNEHEAEHDMPEHSEETHEDESDVPESAEDSYAGYHSEVEDDRHKYDDEDFSHESDDEYVDDHDEHVASYKSDDDQKGDDHSDFTASGQASWLDKIQQTVQNVLRTFNFFKTPVDLSEASRVRKEYDDASSKLSKIQSRISTLTDKLKHDFGKEKEFYYFYDQCFESKEGKYVYKVCPFKKASQVEGHSTTSLGRWDKFEESYRVMQFSNGDRCWNGPDRSLKVRLRCGLNNELNGVDEPSRCEYVAVLSTPALCDEQKLKELEQKLEASSNQRDHDEL.

An N-terminal signal peptide occupies residues 1–20 (MGLHTLLLLLLLRISASAAA). N-linked (GlcNAc...) asparagine glycosylation is present at asparagine 115. 3 stretches are compositionally biased toward basic and acidic residues: residues 194–222 (EEER…KKAS), 231–272 (QENH…HDPE), and 324–351 (TGEK…HSEE). Residues 194–396 (EEERLRKEKE…SHESDDEYVD (203 aa)) form a disordered region. Acidic residues predominate over residues 352-364 (THEDESDVPESAE). The segment covering 372–382 (SEVEDDRHKYD) has biased composition (basic and acidic residues). Over residues 383–396 (DEDFSHESDDEYVD) the composition is skewed to acidic residues. In terms of domain architecture, MRH spans 497–592 (DQCFESKEGK…VLSTPALCDE (96 aa)). Cystine bridges form between cysteine 499-cysteine 512, cysteine 549-cysteine 578, and cysteine 563-cysteine 590.

As to quaternary structure, heterodimer of a catalytic alpha subunit and a beta subunit.

It localises to the endoplasmic reticulum. It functions in the pathway glycan metabolism; N-glycan metabolism. In terms of biological role, regulatory subunit of glucosidase II. May be required for defense response elicited by pathogen-associated molecular patterns (PAMPs). This chain is Glucosidase 2 subunit beta, found in Oryza sativa subsp. indica (Rice).